The following is a 343-amino-acid chain: D-beta-hydroxybutyrate dehydrogenase, mitochondrial (343 aa).

The N-terminal 46 residues, 1-46 (MLAARLSRPLSQLPGKALSVCDRENGTRHTLLFYPASFSPDTRRTY), are a transit peptide targeting the mitochondrion. 59 to 83 (LVTGCDSGFGFSLAKHLHSKGFLVF) is a binding site for NAD(+). Residue K73 is modified to N6-acetyllysine. K103 is modified (N6-acetyllysine; alternate). K103 is subject to N6-succinyllysine; alternate. Residues K132 and K177 each carry the N6-acetyllysine modification. S195 is a substrate binding site. The active-site Proton acceptor is Y208. K212 is modified (N6-acetyllysine). The O-linked (GlcNAc) serine glycan is linked to S219. S246 is subject to Phosphoserine. K258 is subject to N6-acetyllysine. K259 is modified (N6-acetyllysine; alternate). Residue K259 is modified to N6-succinyllysine; alternate. Residue K280 is modified to N6-acetyllysine.

Belongs to the short-chain dehydrogenases/reductases (SDR) family. As to quaternary structure, homotetramer. Expressed in liver.

Its subcellular location is the mitochondrion inner membrane. It is found in the mitochondrion matrix. It catalyses the reaction (R)-3-hydroxybutanoate + NAD(+) = acetoacetate + NADH + H(+). Its activity is regulated as follows. Requires phosphatidylcholine as an allosteric activator for enzymatic activity. The polypeptide is D-beta-hydroxybutyrate dehydrogenase, mitochondrial (Rattus norvegicus (Rat)).